A 159-amino-acid chain; its full sequence is uncharacterized protein (159 aa).

This is an uncharacterized protein from Homo sapiens (Human).